The chain runs to 142 residues: Hemoglobin subunit alpha (142 aa).

Position 1 is an N-acetylserine (serine 1). In terms of domain architecture, Globin spans 1–142 (SLSEKNKAAV…VALALADRYR (142 aa)). O2 is bound at residue histidine 59. Residue histidine 88 coordinates heme b.

The protein belongs to the globin family. As to quaternary structure, heterotetramer of two alpha chains and two beta chains. As to expression, red blood cells.

Its function is as follows. Involved in oxygen transport from gills to the various peripheral tissues. The protein is Hemoglobin subunit alpha (hba) of Pagothenia borchgrevinki (Bald rockcod).